Consider the following 307-residue polypeptide: NAD kinase 2 (307 aa).

The active-site Proton acceptor is the Asp77. NAD(+)-binding positions include 77–78 (DG), 151–152 (NE), Asp181, 192–197 (TAYALS), and Asn251.

The protein belongs to the NAD kinase family. A divalent metal cation serves as cofactor.

It is found in the cytoplasm. The enzyme catalyses NAD(+) + ATP = ADP + NADP(+) + H(+). Involved in the regulation of the intracellular balance of NAD and NADP, and is a key enzyme in the biosynthesis of NADP. Catalyzes specifically the phosphorylation on 2'-hydroxyl of the adenosine moiety of NAD to yield NADP. The chain is NAD kinase 2 from Thermosynechococcus vestitus (strain NIES-2133 / IAM M-273 / BP-1).